The primary structure comprises 339 residues: Ketol-acid reductoisomerase (NADP(+)) (339 aa).

One can recognise a KARI N-terminal Rossmann domain in the interval 1–182; the sequence is MRVYYDRDAD…GGGRAGIIET (182 aa). NADP(+) contacts are provided by residues 24–27, Arg-48, Ser-51, Thr-53, and 83–86; these read YGSQ and DELQ. Residue His-108 is part of the active site. Residue Gly-134 coordinates NADP(+). In terms of domain architecture, KARI C-terminal knotted spans 183-328; the sequence is TFKEECETDL…AKLRGMMPWI (146 aa). Positions 191, 195, 227, and 231 each coordinate Mg(2+). Position 252 (Ser-252) interacts with substrate.

The protein belongs to the ketol-acid reductoisomerase family. Mg(2+) serves as cofactor.

It catalyses the reaction (2R)-2,3-dihydroxy-3-methylbutanoate + NADP(+) = (2S)-2-acetolactate + NADPH + H(+). The enzyme catalyses (2R,3R)-2,3-dihydroxy-3-methylpentanoate + NADP(+) = (S)-2-ethyl-2-hydroxy-3-oxobutanoate + NADPH + H(+). The protein operates within amino-acid biosynthesis; L-isoleucine biosynthesis; L-isoleucine from 2-oxobutanoate: step 2/4. It participates in amino-acid biosynthesis; L-valine biosynthesis; L-valine from pyruvate: step 2/4. Involved in the biosynthesis of branched-chain amino acids (BCAA). Catalyzes an alkyl-migration followed by a ketol-acid reduction of (S)-2-acetolactate (S2AL) to yield (R)-2,3-dihydroxy-isovalerate. In the isomerase reaction, S2AL is rearranged via a Mg-dependent methyl migration to produce 3-hydroxy-3-methyl-2-ketobutyrate (HMKB). In the reductase reaction, this 2-ketoacid undergoes a metal-dependent reduction by NADPH to yield (R)-2,3-dihydroxy-isovalerate. The protein is Ketol-acid reductoisomerase (NADP(+)) of Methylorubrum extorquens (strain CM4 / NCIMB 13688) (Methylobacterium extorquens).